The primary structure comprises 39 residues: Hementin (39 aa).

The cofactor is a divalent metal cation. In terms of tissue distribution, expressed mainly in the posterior salivary glands and, to a lesser extent, in the anterior salivary glands and secreted into the proboscis (at protein level).

Its subcellular location is the secreted. Inhibited by EDTA, cysteine, DTT and sodium phosphate. Partially inhibited by EGTA, citrate, Tris and glycine. Not inhibited by DFP, PMSF, iodoacetic acid and leupeptin. Requires sodium chloride concentrations higher than 0.15 M for activity. In terms of biological role, metalloprotease with anticoagulant activity. Cleaves fibrinogen Aalpha (FGA), gamma (FGG) and Bbeta (FGB) chains after positions 'Asn-121', 'Lys-160' and 'Pro-102', respectively. Breaks down cross-linked and non-cross-linked fibrin clots. Prevents and reverts platelet aggregation induced by ADP and collagen. Prevents thrombin-induced platelet clotting. Does not affect plasma levels of coagulation factors prothrombin (F2), V (F5), VII (F7), VIII (F8), IX (F9), X (F10), XI (F11), XII (F12), plasma kallikrein (KLKB1) and kininogen-1 (KNG1). This Haementeria ghilianii (Amazon leech) protein is Hementin.